Here is a 96-residue protein sequence, read N- to C-terminus: Putative translation initiation factor IF-1, chloroplastic (96 aa).

Positions 18-57 (INYVSGKIRHSFIRILPGDRVKIEVSPYDSTKGRIIYRLH) constitute an S1-like domain.

The protein belongs to the IF-1 family. Component of the 30S ribosomal translation pre-initiation complex which assembles on the 30S ribosome in the order IF-2 and IF-3, IF-1 and N-formylmethionyl-tRNA(fMet); mRNA recruitment can occur at any time during PIC assembly.

The protein localises to the plastid. It is found in the chloroplast. Functionally, one of the essential components for the initiation of protein synthesis. Stabilizes the binding of IF-2 and IF-3 on the 30S subunit to which N-formylmethionyl-tRNA(fMet) subsequently binds. Helps modulate mRNA selection, yielding the 30S pre-initiation complex (PIC). Upon addition of the 50S ribosomal subunit IF-1, IF-2 and IF-3 are released leaving the mature 70S translation initiation complex. The protein is Putative translation initiation factor IF-1, chloroplastic (infA) of Nicotiana tabacum (Common tobacco).